The chain runs to 155 residues: MSNQNGKTKLITDNRQARFLYEILETYEAGIELTGTEVKSIRAGRINLKDGYALIRNGEAWLINVHISPYEASGQYFNHDPRRTRKLLLHRKEINKLIGQVEQKGLTLVPLKMYFKDSWVKVSIGLAQGKKLHDKRETLKRRQDERDMQRAMKRW.

It belongs to the SmpB family.

It localises to the cytoplasm. Its function is as follows. Required for rescue of stalled ribosomes mediated by trans-translation. Binds to transfer-messenger RNA (tmRNA), required for stable association of tmRNA with ribosomes. tmRNA and SmpB together mimic tRNA shape, replacing the anticodon stem-loop with SmpB. tmRNA is encoded by the ssrA gene; the 2 termini fold to resemble tRNA(Ala) and it encodes a 'tag peptide', a short internal open reading frame. During trans-translation Ala-aminoacylated tmRNA acts like a tRNA, entering the A-site of stalled ribosomes, displacing the stalled mRNA. The ribosome then switches to translate the ORF on the tmRNA; the nascent peptide is terminated with the 'tag peptide' encoded by the tmRNA and targeted for degradation. The ribosome is freed to recommence translation, which seems to be the essential function of trans-translation. This Gloeothece citriformis (strain PCC 7424) (Cyanothece sp. (strain PCC 7424)) protein is SsrA-binding protein.